A 132-amino-acid chain; its full sequence is Large ribosomal subunit protein uL14 (132 aa).

The protein belongs to the universal ribosomal protein uL14 family. As to quaternary structure, part of the 50S ribosomal subunit. Forms a cluster with proteins L3 and L24e, part of which may contact the 16S rRNA in 2 intersubunit bridges.

Its function is as follows. Binds to 23S rRNA. Forms part of two intersubunit bridges in the 70S ribosome. The polypeptide is Large ribosomal subunit protein uL14 (Picrophilus torridus (strain ATCC 700027 / DSM 9790 / JCM 10055 / NBRC 100828 / KAW 2/3)).